A 430-amino-acid polypeptide reads, in one-letter code: Bone morphogenetic protein 7 (430 aa).

The N-terminal stretch at 1–29 (MHVRSLRAAAPHSFVALWAPLFLLRSALA) is a signal peptide. The propeptide occupies 30–291 (DFSLDNEVHS…ATEVHLRSIR (262 aa)). N-linked (GlcNAc...) asparagine glycosylation is found at asparagine 186, asparagine 301, asparagine 320, and asparagine 371. The interval 290–310 (IRSTGGKQRSQNRSKTPKNQE) is disordered. Intrachain disulfides connect cysteine 329–cysteine 395, cysteine 358–cysteine 427, and cysteine 362–cysteine 429.

This sequence belongs to the TGF-beta family. As to quaternary structure, homodimer; disulfide-linked. Interacts with SOSTDC1. Interacts with TWSG1. Interacts with FBN1 (via N-terminal domain) and FBN2. Interacts with type I receptor ACVR1. Interacts with type II receptor ACVR2A. Interacts with NOG; this interaction inhibits canonical BMP signaling. Interacts with SCUBE3. Interacts with ERFE; the interaction inhibits BMP-induced transcription of HAMP. Interacts with TGFBR3.

Its subcellular location is the secreted. Functionally, growth factor of the TGF-beta superfamily that plays important role in various biological processes, including embryogenesis, hematopoiesis, neurogenesis and skeletal morphogenesis. Initiates the canonical BMP signaling cascade by associating with type I receptor ACVR1 and type II receptor ACVR2A. Once all three components are bound together in a complex at the cell surface, ACVR2A phosphorylates and activates ACVR1. In turn, ACVR1 propagates signal by phosphorylating SMAD1/5/8 that travel to the nucleus and act as activators and repressors of transcription of target genes. For specific functions such as growth cone collapse in developing spinal neurons and chemotaxis of monocytes, also uses BMPR2 as type II receptor. Can also signal through non-canonical pathways such as P38 MAP kinase signaling cascade that promotes brown adipocyte differentiation through activation of target genes, including members of the SOX family of transcription factors. Promotes the expression of HAMP, this is repressed by its interaction with ERFE. This Mus musculus (Mouse) protein is Bone morphogenetic protein 7 (Bmp7).